We begin with the raw amino-acid sequence, 592 residues long: Catabolite repression protein creC (592 aa).

A disordered region spans residues 119 to 140 (NSALAAAPVKDPSKKRKPKNNI). 4 WD repeats span residues 248–288 (INSS…ALFI), 327–368 (LANQ…DVFR), 369–408 (SYYG…IIAR), and 411–455 (GHDS…LHRP). 2 disordered regions span residues 459-513 (HQTS…HPVE) and 556-592 (WDRP…MGSL). Polar residues-rich tracts occupy residues 484-499 (SSGN…TAAD) and 564-576 (SDNY…SETL). The WD 5 repeat unit spans residues 529-566 (VGEDPICWLGFQEDTIMTSSLEGHIRTWDRPRENISDN).

It belongs to the WD repeat creC family. In terms of assembly, interacts with creB.

Its function is as follows. Component of the regulatory network controlling carbon source utilization through ubiquitination and deubiquitination involving creA, creB, creC, creD and acrB. Required to prevent the proteolysis of the CreB deubiquitinating enzyme in the absence of carbon catabolite repression. CreB deubiquitinating enzyme stabilized in a complex with the CreC leads to the expression of genes such as those in the proline and quinate pathways. The polypeptide is Catabolite repression protein creC (creC) (Emericella nidulans (strain FGSC A4 / ATCC 38163 / CBS 112.46 / NRRL 194 / M139) (Aspergillus nidulans)).